The primary structure comprises 269 residues: MPELPEVETSRRGISPYLVDHTILYAEVRNTRLRWPVSGEILSLSDEPVLSVRRRAKYLLIELTRGWIIVHLGMSGSLRVLPEYSEPEKHDHVDLVMDSGKVLRYTDPRRFGAWLWTDNPETCSVLAHLGPEPLEAEFSADYLYQASRGKKTAIKQWIMDNKVVVGVGNIYASESLFAAGIHPDRAAGSLNENDAAVLVSVIKQVLQLSIEQGGTTLRDFLQSDGKPGYFAQELRVYGRNGEPCRTCGTPIETAKHGQRSTFFCRRCQK.

Pro-2 (schiff-base intermediate with DNA) is an active-site residue. Residue Glu-3 is the Proton donor of the active site. Residue Lys-57 is the Proton donor; for beta-elimination activity of the active site. DNA is bound by residues His-90, Arg-109, and Lys-150. Residues 235 to 269 (RVYGRNGEPCRTCGTPIETAKHGQRSTFFCRRCQK) form an FPG-type zinc finger. The Proton donor; for delta-elimination activity role is filled by Arg-259.

Belongs to the FPG family. In terms of assembly, monomer. It depends on Zn(2+) as a cofactor.

It carries out the reaction Hydrolysis of DNA containing ring-opened 7-methylguanine residues, releasing 2,6-diamino-4-hydroxy-5-(N-methyl)formamidopyrimidine.. The enzyme catalyses 2'-deoxyribonucleotide-(2'-deoxyribose 5'-phosphate)-2'-deoxyribonucleotide-DNA = a 3'-end 2'-deoxyribonucleotide-(2,3-dehydro-2,3-deoxyribose 5'-phosphate)-DNA + a 5'-end 5'-phospho-2'-deoxyribonucleoside-DNA + H(+). Its function is as follows. Involved in base excision repair of DNA damaged by oxidation or by mutagenic agents. Acts as a DNA glycosylase that recognizes and removes damaged bases. Has a preference for oxidized purines, such as 7,8-dihydro-8-oxoguanine (8-oxoG). Has AP (apurinic/apyrimidinic) lyase activity and introduces nicks in the DNA strand. Cleaves the DNA backbone by beta-delta elimination to generate a single-strand break at the site of the removed base with both 3'- and 5'-phosphates. This Pectobacterium carotovorum subsp. carotovorum (strain PC1) protein is Formamidopyrimidine-DNA glycosylase.